Reading from the N-terminus, the 63-residue chain is Large ribosomal subunit protein uL29 (63 aa).

Belongs to the universal ribosomal protein uL29 family.

This Shigella flexneri protein is Large ribosomal subunit protein uL29.